We begin with the raw amino-acid sequence, 427 residues long: MKIWKSILFTTLLSCGAVAAPVELDKVAVIVNDGVILQSDINTAMKTLQANARQSGKSLPSASVLKEQVVEKLIIDTLQGQEADRIGVRIDDNRLNQAIAEIARNNNQSVEELAASVQAEGLSYPEFREQIRKEIAASEARNALVRRRINILPAEVDSLADQLAKETNATVQYKIGHIQLRFTDGQDKSEVEAQAKALVKKLNDGADFTEMAYTYSKGPKALQGGDWGWMRKEEMPTIFADQIKMQNKGSIIGPFRSGVGFHILKIEDVKGLETVAVTEVNARHILIKPTVILSDEGAKKQLNEFVRRIKAGEATFAQLASQYSQDPGSAAQDGELGYQTPDLYVPEFKHQVETLPVGSISEPFKTVHGWHIVEVLDRRQVDRTDSAMKNKAYRILFNRKFNEEAGAWMQELRASAFVEIVDDNNDN.

Residues 1-19 form the signal peptide; sequence MKIWKSILFTTLLSCGAVA. PpiC domains are found at residues 170-268 and 277-377; these read TVQY…KIED and VTEV…EVLD.

The protein resides in the periplasm. It carries out the reaction [protein]-peptidylproline (omega=180) = [protein]-peptidylproline (omega=0). In terms of biological role, chaperone involved in the correct folding and assembly of outer membrane proteins. Recognizes specific patterns of aromatic residues and the orientation of their side chains, which are found more frequently in integral outer membrane proteins. May act in both early periplasmic and late outer membrane-associated steps of protein maturation. This Vibrio parahaemolyticus serotype O3:K6 (strain RIMD 2210633) protein is Chaperone SurA.